The following is a 349-amino-acid chain: tRNA pseudouridine synthase D (349 aa).

A substrate-binding site is contributed by Phe26. Asp79 (nucleophile) is an active-site residue. Residue Asn128 coordinates substrate. The TRUD domain maps to 154–302; that stretch reads GVPNYFGSQR…VEGARRAILL (149 aa). Phe328 contributes to the substrate binding site.

This sequence belongs to the pseudouridine synthase TruD family.

It catalyses the reaction uridine(13) in tRNA = pseudouridine(13) in tRNA. Responsible for synthesis of pseudouridine from uracil-13 in transfer RNAs. This is tRNA pseudouridine synthase D from Yersinia enterocolitica serotype O:8 / biotype 1B (strain NCTC 13174 / 8081).